The following is a 421-amino-acid chain: D-amino acid dehydrogenase (421 aa).

3-17 (VIVLGSGVIGVASAY) contributes to the FAD binding site.

This sequence belongs to the DadA oxidoreductase family. Requires FAD as cofactor.

The catalysed reaction is a D-alpha-amino acid + A + H2O = a 2-oxocarboxylate + AH2 + NH4(+). It participates in amino-acid degradation; D-alanine degradation; NH(3) and pyruvate from D-alanine: step 1/1. Functionally, oxidative deamination of D-amino acids. The chain is D-amino acid dehydrogenase from Acinetobacter baumannii (strain ATCC 17978 / DSM 105126 / CIP 53.77 / LMG 1025 / NCDC KC755 / 5377).